The following is a 295-amino-acid chain: MNSRITLALESAPTAIKALLSDIVLADNFDATLSPEQFASLLQASGLADDELRIALLPFAAAYSYAPLSDFYVGAIVRGLSGTLYFGANLEIAGAQLGQTVHAEQSAISHAWMKGEQGISDITINFSPCGHCRQFMNELTTAKELKVQLPQRDEMSLQEYLPDSFGPADLGVTTGLMTKLDHKHTTEETTPIVVEALAALNRSHAPYTKNLSGVSLQLTSGEVFTGAYAENAAFNPSLPPLQVALIQLKLAGFDFEQIENAALVEIAEGSISHLADTQSTLEAINPDIPVTYLAI.

CMP/dCMP-type deaminase domains lie at 48–168 and 187–295; these read ADDE…FGPA and EETT…YLAI. 89 to 91 lines the substrate pocket; sequence NLE. H102 contacts Zn(2+). E104 serves as the catalytic Proton donor. Zn(2+) is bound by residues C129 and C132.

It belongs to the cytidine and deoxycytidylate deaminase family. As to quaternary structure, homodimer. Zn(2+) serves as cofactor.

It carries out the reaction cytidine + H2O + H(+) = uridine + NH4(+). It catalyses the reaction 2'-deoxycytidine + H2O + H(+) = 2'-deoxyuridine + NH4(+). In terms of biological role, this enzyme scavenges exogenous and endogenous cytidine and 2'-deoxycytidine for UMP synthesis. This is Cytidine deaminase from Vibrio atlanticus (strain LGP32) (Vibrio splendidus (strain Mel32)).